The primary structure comprises 444 residues: Glycerol-3-phosphate transporter (444 aa).

The Cytoplasmic portion of the chain corresponds to Met1 to Ile36. The chain crosses the membrane as a helical span at residues Gly37 to Glu57. Residues Gln58–Thr63 lie on the Extracellular side of the membrane. Residues Glu64–Gly84 form a helical membrane-spanning segment. The Cytoplasmic portion of the chain corresponds to Met85–Arg93. The helical transmembrane segment at Tyr94–Ser112 threads the bilayer. The Extracellular segment spans residues Met113–Val120. Residues Thr121–Cys141 traverse the membrane as a helical segment. Over Gly142–Ile160 the chain is Cytoplasmic. The chain crosses the membrane as a helical span at residues Trp161–Ile180. The Extracellular portion of the chain corresponds to Ala181 to Val189. A helical transmembrane segment spans residues Phe190 to Leu207. The Cytoplasmic segment spans residues Val208–Ala261. A helical transmembrane segment spans residues Asn262–Glu282. The Extracellular segment spans residues Ala283–Ser287. Residues Pro288–Leu308 traverse the membrane as a helical segment. Over Cys309–Arg321 the chain is Cytoplasmic. The helical transmembrane segment at Ala322–Leu341 threads the bilayer. At Asn342–Asn346 the chain is on the extracellular side. A helical transmembrane segment spans residues Pro347 to Ile368. Over Gly369–Leu387 the chain is Cytoplasmic. Residues Thr388–Asp409 form a helical membrane-spanning segment. Residues Arg410–Asn414 lie on the Extracellular side of the membrane. A helical transmembrane segment spans residues Gly415 to Trp435. Residues Asn436 to Val444 are Cytoplasmic-facing.

The protein belongs to the major facilitator superfamily. Organophosphate:Pi antiporter (OPA) (TC 2.A.1.4) family.

The protein resides in the cell membrane. Responsible for glycerol-3-phosphate uptake. This chain is Glycerol-3-phosphate transporter (glpT), found in Bacillus subtilis (strain 168).